Reading from the N-terminus, the 127-residue chain is Cystatin cpi-1 (127 aa).

Residues 1–19 (MFFPIVWLSVLLIISKSFA) form the signal peptide. The Secondary area of contact signature appears at 68–72 (QVVAG). A disulfide bridge links C86 with C98.

This sequence belongs to the cystatin family.

Functionally, cysteine protease inhibitor which inhibits members of the peptidase C1 family. Does not inhibit asparaginyl endopeptidase. In Brugia malayi (Filarial nematode worm), this protein is Cystatin cpi-1.